We begin with the raw amino-acid sequence, 353 residues long: Photosystem II D2 protein (353 aa).

The residue at position 2 (Thr2) is an N-acetylthreonine. Thr2 is modified (phosphothreonine). The chain crosses the membrane as a helical span at residues 41 to 61; sequence CAYFALGGWFTGTTFVTSWYT. His118 is a chlorophyll a binding site. A helical membrane pass occupies residues 125-141; that stretch reads GFMLRQFELARPVQLRP. Pheophytin a is bound by residues Gln130 and Asn143. Residues 153–166 form a helical membrane-spanning segment; the sequence is VFLSVFLIYPLGQS. Residue His198 coordinates chlorophyll a. A helical membrane pass occupies residues 208–228; the sequence is AVLLCAIHGATVENTLFEDGD. A plastoquinone contacts are provided by His215 and Phe262. Position 215 (His215) interacts with Fe cation. His269 is a binding site for Fe cation. The helical transmembrane segment at 279–295 threads the bilayer; that stretch reads GLWMSAIGVVGLALNLR.

This sequence belongs to the reaction center PufL/M/PsbA/D family. In terms of assembly, PSII is composed of 1 copy each of membrane proteins PsbA, PsbB, PsbC, PsbD, PsbE, PsbF, PsbH, PsbI, PsbJ, PsbK, PsbL, PsbM, PsbT, PsbX, PsbY, PsbZ, Psb30/Ycf12, at least 3 peripheral proteins of the oxygen-evolving complex and a large number of cofactors. It forms dimeric complexes. The D1/D2 heterodimer binds P680, chlorophylls that are the primary electron donor of PSII, and subsequent electron acceptors. It shares a non-heme iron and each subunit binds pheophytin, quinone, additional chlorophylls, carotenoids and lipids. There is also a Cl(-1) ion associated with D1 and D2, which is required for oxygen evolution. The PSII complex binds additional chlorophylls, carotenoids and specific lipids. serves as cofactor. Only phosphorylated in mesophyll cells, phosphorylation increases when cells are grown under high rather than low light regimes (70 vs 900 umol photons/m-2/s).

It localises to the plastid. The protein localises to the chloroplast thylakoid membrane. The enzyme catalyses 2 a plastoquinone + 4 hnu + 2 H2O = 2 a plastoquinol + O2. Its function is as follows. Photosystem II (PSII) is a light-driven water:plastoquinone oxidoreductase that uses light energy to abstract electrons from H(2)O, generating O(2) and a proton gradient subsequently used for ATP formation. It consists of a core antenna complex that captures photons, and an electron transfer chain that converts photonic excitation into a charge separation. The D1/D2 (PsbA/PsbD) reaction center heterodimer binds P680, the primary electron donor of PSII as well as several subsequent electron acceptors. D2 is needed for assembly of a stable PSII complex. The polypeptide is Photosystem II D2 protein (Zea mays (Maize)).